Reading from the N-terminus, the 125-residue chain is NADH dehydrogenase [ubiquinone] 1 beta subcomplex subunit 8, mitochondrial (125 aa).

Residues 1–29 (MAGRLSGVASRIMGGNGVVARSVGSSLRQ) constitute a mitochondrion transit peptide. The chain crosses the membrane as a helical span at residues 78–98 (ALAWLSGGLGFFVGLGLLAVL).

Belongs to the complex I NDUFB8 subunit family. As to quaternary structure, complex I is composed of at least 49 different subunits.

It localises to the mitochondrion inner membrane. Its function is as follows. Accessory subunit of the mitochondrial membrane respiratory chain NADH dehydrogenase (Complex I), that is believed not to be involved in catalysis. Complex I functions in the transfer of electrons from NADH to the respiratory chain. The immediate electron acceptor for the enzyme is believed to be ubiquinone. This chain is NADH dehydrogenase [ubiquinone] 1 beta subcomplex subunit 8, mitochondrial, found in Arabidopsis thaliana (Mouse-ear cress).